Consider the following 373-residue polypeptide: Lipoyl amidotransferase LIPT1, mitochondrial (373 aa).

The N-terminal 25 residues, 1–25, are a transit peptide targeting the mitochondrion; that stretch reads MLIPFSMKNCFQLLCNLKVPAAGFK. The BPL/LPL catalytic domain occupies 57 to 243; the sequence is LEGKPVLFLW…EYATSHQIDN (187 aa). Tyr107, Arg151, Lys161, Thr179, Thr208, and Ala210 together coordinate (R)-lipoyl-5'-AMP.

It belongs to the LplA family.

Its subcellular location is the mitochondrion. The enzyme catalyses N(6)-[(R)-lipoyl]-L-lysyl-[glycine-cleavage complex H protein] + L-lysyl-[lipoyl-carrier protein] = L-lysyl-[glycine-cleavage complex H protein] + N(6)-[(R)-lipoyl]-L-lysyl-[lipoyl-carrier protein]. It catalyses the reaction (R)-lipoyl-5'-AMP + L-lysyl-[lipoyl-carrier protein] = N(6)-[(R)-lipoyl]-L-lysyl-[lipoyl-carrier protein] + AMP + 2 H(+). It participates in protein modification; protein lipoylation via exogenous pathway; protein N(6)-(lipoyl)lysine from lipoate: step 2/2. Its activity is regulated as follows. Inhibited by lipoyl-AMP analogs including hexanoyl-, octanoyl- and decanoyl-AMP. In terms of biological role, lipoyl amidotransferase that catalyzes the transfer of lipoyl moieties from lipoyl-protein H of the glycine cleavage system (lipoyl-GCSH) to E2 subunits of the pyruvate dehydrogenase complex (PDCE2). Unable to catalyze the transfer of octanoyl from octanoyl-GCSH to PDCE2. In vitro, it is also able to catalyze the transfer of the lipoyl group from lipoyl-AMP to the specific lysine residue of lipoyl domains of lipoate-dependent enzymes but this reaction may not be physiologically relevant. This Bos taurus (Bovine) protein is Lipoyl amidotransferase LIPT1, mitochondrial (LIPT1).